Consider the following 602-residue polypeptide: Bifunctional xylanase/deacetylase (602 aa).

The signal sequence occupies residues 1-14 (MSATLLVPSMTVKA). The GH11 domain occupies 17–211 (TIYNNKTGNQ…SSGSASVYKN (195 aa)). E108 (nucleophile) is an active-site residue. The active-site Proton donor is E198. Positions 216–240 (GGSSSSSGNQGGNQGGNTGNENAGN) are disordered. Residues 224–233 (NQGGNQGGNT) are compositionally biased toward gly residues. The region spanning 249 to 366 (DKIQCETMTK…DAYLDYFNNS (118 aa)) is the CBM6 domain. The NodB homology domain maps to 402-578 (KLIALTFDDG…GLKNQGYTFV (177 aa)).

It belongs to the glycosyl hydrolase 11 (cellulase G) family. In the later growth phases, seems to undergo a proteolytic cleavage into a 30 kDa protein possessing xylanolytic activity.

It localises to the secreted. The catalysed reaction is Endohydrolysis of (1-&gt;4)-beta-D-xylosidic linkages in xylans.. It participates in glycan degradation; xylan degradation. Functionally, endo-acting xylanase which specifically cleaves internal linkages on the xylan backbone, releasing xylooligosaccharides. Is also probably able, via its C-terminal domain, to remove acetyl groups from acetylated xylan, and thus it is probably capable of hydrolyzing acetylated xylan. The protein is Bifunctional xylanase/deacetylase (xyn11A) of Pseudobutyrivibrio xylanivorans.